The chain runs to 24 residues: Caerulein precursor fragment B4 (24 aa).

As to expression, expressed by the skin glands.

Its subcellular location is the secreted. In terms of biological role, has antibacterial and antifungal activity. This Xenopus borealis (Kenyan clawed frog) protein is Caerulein precursor fragment B4.